A 322-amino-acid polypeptide reads, in one-letter code: MADKQISLPAKLINGGIAGLIGVTCVFPIDLAKTRLQNQQNGQRMYTSMSDCLIKTIRSEGYFGMYRGAAVNLTLVTPEKAIKLAANDFFRYQLSKDGQQLTLFKEMLAGCGAGTCQVIVTTPMEMLKIQLQDAGRLAAQRKILSAQAQLSGQGSAQPSVEAPATPRPTATQLTRDLLRSRGIAGLYKGLGATLLRDVPFSIVYFPLFANLNELGRPASGEKSPFYVSFLAGCVAGSAAAVAVNPCDVVKTRLQSLQRGINEDTYSGFLDCARKILQNEGPSAFLKGAYCRALVIAPLFGIAQVVYFLGIAETLLGLPRVQP.

Solcar repeat units follow at residues I6–Q93, L101–L214, and S223–E312. 6 helical membrane-spanning segments follow: residues L12–A32, Y62–I82, M107–L127, G189–A209, S223–V243, and A292–E312.

This sequence belongs to the mitochondrial carrier (TC 2.A.29) family.

Its subcellular location is the mitochondrion inner membrane. The catalysed reaction is L-glutamate(in) + H(+)(in) = L-glutamate(out) + H(+)(out). Mitochondrial glutamate/H(+) symporter. Responsible for the transport of glutamate from the cytosol into the mitochondrial matrix with the concomitant import of a proton. Plays a role in the control of glucose-stimulated insulin secretion. This Bos taurus (Bovine) protein is Mitochondrial glutamate carrier 1 (SLC25A22).